Here is a 470-residue protein sequence, read N- to C-terminus: Monocarboxylate transporter 4 (470 aa).

Topologically, residues 1–17 (MGGAVVDEGPTGIKAPD) are cytoplasmic. Residues 18–38 (GGWGWAVLFGCFIITGFSYAF) form a helical membrane-spanning segment. Residues 39–61 (PKAVSVFFKELMHEFGIGYSDTA) are Extracellular-facing. Residues 62–82 (WISSILLAMLYGTGPLCSVCV) traverse the membrane as a helical segment. At 83–84 (NR) the chain is on the cytoplasmic side. The chain crosses the membrane as a helical span at residues 85 to 105 (FGCRPVMLVGGLFASLGMVAA). The Extracellular segment spans residues 106–109 (SFCR). A helical membrane pass occupies residues 110–130 (SIIQIYLTTGVITGLGLALNF). Residues 131–149 (QPSLIMLNRYFNKRRPIAN) lie on the Cytoplasmic side of the membrane. A helical transmembrane segment spans residues 150–170 (GLAAAGSPVFLCALSPLGQLL). Residues 171 to 179 (QDHYGWRGG) lie on the Extracellular side of the membrane. The helical transmembrane segment at 180–200 (FLILGGLLLNCCVCAALMRPL) threads the bilayer. The Cytoplasmic portion of the chain corresponds to 201-231 (VAPQVGGGTEPRGPQRPPQRLLDLSVFRDRG). Residues 232–252 (FLIYAVAASIMVLGLFVPPVF) form a helical membrane-spanning segment. The Extracellular segment spans residues 253 to 267 (VVSYAKDMGVPDTKA). The helical transmembrane segment at 268-288 (AFLLTILGFIDIFARPTAGFI) threads the bilayer. The Cytoplasmic portion of the chain corresponds to 289–298 (TGLKKVRPYS). The chain crosses the membrane as a helical span at residues 299–319 (VYLFSFAMFFNGFTDLTGSTA). Topologically, residues 320 to 321 (TD) are extracellular. A helical membrane pass occupies residues 322–342 (YGGLVVFCIFFGISYGMVGAL). Residues 343–355 (QFEVLMAIVGTQK) lie on the Cytoplasmic side of the membrane. Residues 356–376 (FSSAIGLVLLLEAVAVLIGPP) traverse the membrane as a helical segment. Residues 377–391 (SGGKLLDATKVYKYV) lie on the Extracellular side of the membrane. The helical transmembrane segment at 392–412 (FILAGAEVLTSSLVLLLGNFF) threads the bilayer. Topologically, residues 413–470 (CIGKRKRPEVTEPEEVASEEKLHKPPVDVGVDSREVEHFLKAEPEKNGEVVHTPETSV) are cytoplasmic. Basolateral sorting signal regions lie at residues 429-446 (ASEE…VDSR) and 446-470 (REVE…ETSV). S430 is subject to Phosphoserine. T465 carries the phosphothreonine modification. S469 carries the phosphoserine modification.

It belongs to the major facilitator superfamily. Monocarboxylate porter (TC 2.A.1.13) family. In terms of assembly, interacts with BSG; interaction mediates SLC16A3 targeting to the plasma membrane.

Its subcellular location is the cell membrane. It is found in the basolateral cell membrane. The enzyme catalyses (S)-lactate(in) + H(+)(in) = (S)-lactate(out) + H(+)(out). The catalysed reaction is pyruvate(out) + H(+)(out) = pyruvate(in) + H(+)(in). In terms of biological role, proton-dependent transporter of monocarboxylates such as L-lactate and pyruvate. Plays a predominant role in the L-lactate efflux from highly glycolytic cells. This chain is Monocarboxylate transporter 4 (Slc16a3), found in Mus musculus (Mouse).